The chain runs to 943 residues: U3 small nucleolar RNA-associated protein 12 (943 aa).

WD repeat units follow at residues 77–107 (AKPAECTYLEAHKDTDLLAVGYADGVIKVWD), 119–149 (GHKAAITLLQFDGTGTRLISGSKDSNIIVWD), 161–190 (SHKDSITGFWCQGEDWLISTSKDGMIKLWD), 202–230 (AHTGECWGLAVKDDLLITTGTDSQVKIWK), 389–418 (GQRTDVRSIDISDDNKLLATASNGSLKIWN), 428–458 (FECGYALTCKFLPGGLLVILGTRNGELQLFD), 471–501 (AHDAAIWSLDLTSDGKRLVTGSADKTVKFWD), 571–601 (GHKLPVLSIDISFDSKMIITSSADKNIKIWG), 613–643 (AHQDSIMNVKFLPQSHNFFSCSKDAVVKYWD), and 655–685 (AHQSEVWALAVATDGGFVVSSSHDHSIRIWE). Residues 715–739 (EGNGDDAFKADASGEGVEDEASGVH) are disordered.

This sequence belongs to the WD repeat WDR3/UTP12 family. As to quaternary structure, interacts with snoRNA U3. Interacts with MPP10. Component of the ribosomal small subunit (SSU) processome composed of at least 40 protein subunits and snoRNA U3.

Its subcellular location is the nucleus. It is found in the nucleolus. Involved in nucleolar processing of pre-18S ribosomal RNA. The protein is U3 small nucleolar RNA-associated protein 12 (DIP2) of Saccharomyces cerevisiae (strain ATCC 204508 / S288c) (Baker's yeast).